Reading from the N-terminus, the 264-residue chain is Thiazole synthase (264 aa).

Catalysis depends on Lys100, which acts as the Schiff-base intermediate with DXP. Residues Gly161, Ala187–Gly188, and Asn209–Thr210 contribute to the 1-deoxy-D-xylulose 5-phosphate site.

This sequence belongs to the ThiG family. As to quaternary structure, homotetramer. Forms heterodimers with either ThiH or ThiS.

It localises to the cytoplasm. The catalysed reaction is [ThiS sulfur-carrier protein]-C-terminal-Gly-aminoethanethioate + 2-iminoacetate + 1-deoxy-D-xylulose 5-phosphate = [ThiS sulfur-carrier protein]-C-terminal Gly-Gly + 2-[(2R,5Z)-2-carboxy-4-methylthiazol-5(2H)-ylidene]ethyl phosphate + 2 H2O + H(+). It functions in the pathway cofactor biosynthesis; thiamine diphosphate biosynthesis. In terms of biological role, catalyzes the rearrangement of 1-deoxy-D-xylulose 5-phosphate (DXP) to produce the thiazole phosphate moiety of thiamine. Sulfur is provided by the thiocarboxylate moiety of the carrier protein ThiS. In vitro, sulfur can be provided by H(2)S. This Nitrosospira multiformis (strain ATCC 25196 / NCIMB 11849 / C 71) protein is Thiazole synthase.